The primary structure comprises 476 residues: Glutamate--tRNA ligase (476 aa).

A 'HIGH' region motif is present at residues 9–19 (PSPTGTLHLGT). The 'KMSKS' region motif lies at 248–252 (KLSKR). Residue Lys251 participates in ATP binding.

Belongs to the class-I aminoacyl-tRNA synthetase family. Glutamate--tRNA ligase type 1 subfamily. As to quaternary structure, monomer.

Its subcellular location is the cytoplasm. It carries out the reaction tRNA(Glu) + L-glutamate + ATP = L-glutamyl-tRNA(Glu) + AMP + diphosphate. In terms of biological role, catalyzes the attachment of glutamate to tRNA(Glu) in a two-step reaction: glutamate is first activated by ATP to form Glu-AMP and then transferred to the acceptor end of tRNA(Glu). This Prochlorococcus marinus (strain NATL2A) protein is Glutamate--tRNA ligase.